Consider the following 345-residue polypeptide: 3-dehydroquinate synthase (345 aa).

Residues 86–90 (GALLD), 110–111 (TT), Lys123, and Lys132 each bind NAD(+). Residues Glu165, His229, and His243 each contribute to the Zn(2+) site.

The protein belongs to the sugar phosphate cyclases superfamily. Dehydroquinate synthase family. Requires NAD(+) as cofactor. Co(2+) serves as cofactor. It depends on Zn(2+) as a cofactor.

The protein localises to the cytoplasm. The enzyme catalyses 7-phospho-2-dehydro-3-deoxy-D-arabino-heptonate = 3-dehydroquinate + phosphate. It functions in the pathway metabolic intermediate biosynthesis; chorismate biosynthesis; chorismate from D-erythrose 4-phosphate and phosphoenolpyruvate: step 2/7. In terms of biological role, catalyzes the conversion of 3-deoxy-D-arabino-heptulosonate 7-phosphate (DAHP) to dehydroquinate (DHQ). This Pyrobaculum aerophilum (strain ATCC 51768 / DSM 7523 / JCM 9630 / CIP 104966 / NBRC 100827 / IM2) protein is 3-dehydroquinate synthase.